The following is an 844-amino-acid chain: NADPH-Fe(3+) oxidoreductase subunit alpha (844 aa).

The region spanning 1–78 is the 2Fe-2S ferredoxin-type domain; it reads MVSLTIDGKD…GIKVTTQSEK (78 aa). [2Fe-2S] cluster-binding residues include Cys34, Cys45, Cys48, and Cys62. Residues 78–117 enclose the 4Fe-4S His(Cys)3-ligated-type domain; it reads KLSRIRQKIMELMLVNHPLDCPVCDAGGECDLQNACYGLG. Positions 94, 98, 101, 107, 146, 149, 152, 186, 189, 192, 196, 222, 225, 229, and 256 each coordinate [4Fe-4S] cluster. 4Fe-4S ferredoxin-type domains follow at residues 137-168 and 177-206; these read PLIESDPNRCILCEKCVKVDHEIVGCNAIRVV and DTVDGNPLNCEFCGNCVAACPTGTLISKPF. Residues 215 to 270 form the 4Fe-4S Mo/W bis-MGD-type domain; sequence FTTTPSVCPFCATGCQIEYHSRNGRVERVTSDDSTYNSGNLCINGRFGYSYINSPD.

As to quaternary structure, heterotetramer with 2 beta subunits. [4Fe-4S] cluster serves as cofactor.

It is found in the cell inner membrane. With respect to regulation, not regulated by FAD or FMN. In terms of biological role, the SfrAB enzymatic complex is probably involved in acetate metabolism and does not participate directly in the reduction of Fe(3+) chelates. May serve as a major route for NADP regeneration. The polypeptide is NADPH-Fe(3+) oxidoreductase subunit alpha (sfrA) (Geobacter sulfurreducens (strain DL-1 / KN400)).